A 425-amino-acid polypeptide reads, in one-letter code: Amidase 1 (425 aa).

N-acetylalanine is present on A2. Catalysis depends on charge relay system residues K36 and S113. The active-site Acyl-ester intermediate is S137.

Belongs to the amidase family. As to expression, expressed in cotyledons, leaves and flower buds. Lower levels in roots, stems and siliques.

It is found in the cytoplasm. It localises to the nucleus. The protein localises to the nucleoplasm. It carries out the reaction a monocarboxylic acid amide + H2O = a monocarboxylate + NH4(+). The catalysed reaction is indole-3-acetamide + H2O = (indol-3-yl)acetate + NH4(+). It catalyses the reaction 2-phenylacetamide + H2O = 2-phenylacetate + NH4(+). The enzyme catalyses L-asparagine + H2O = L-aspartate + NH4(+). It carries out the reaction 1-naphthaleneacetamide + H2O = 1-naphthaleneacetate + NH4(+). With respect to regulation, inhibited by phenylmethylsulfonyl fluoride (PMSF). Functionally, amidase involved in auxin biosynthesis. Converts indole-3-acetamide to indole-3-acetate. Converts phenyl-2-acetamide (PAM) to phenyl-2-acetate. Substrate preference is PAM &gt; IAM. Can also use L-asparagine and 1-naphtalene-acetamide as substrates, but not indole-3-acetonitrile or indole-3-acetyl-L-aspartic acid. This is Amidase 1 from Arabidopsis thaliana (Mouse-ear cress).